Consider the following 194-residue polypeptide: PRELI domain containing protein 3B (194 aa).

Residues 1–172 (MKIWTSEHVF…VIHKLNAEIE (172 aa)) enclose the PRELI/MSF1 domain. 2 positions are modified to phosphoserine: serine 46 and serine 51.

This sequence belongs to the slowmo family.

This is PRELI domain containing protein 3B (PRELID3B) from Sus scrofa (Pig).